We begin with the raw amino-acid sequence, 644 residues long: Exoribonuclease 2 (644 aa).

The RNB domain occupies 189–516 (RRDLTALNFV…NHRLLKAIVK (328 aa)). Residues 561–643 (DTRFAAEIID…ETRSIIARPV (83 aa)) enclose the S1 motif domain.

The protein belongs to the RNR ribonuclease family. RNase II subfamily.

Its subcellular location is the cytoplasm. It catalyses the reaction Exonucleolytic cleavage in the 3'- to 5'-direction to yield nucleoside 5'-phosphates.. Its function is as follows. Involved in mRNA degradation. Hydrolyzes single-stranded polyribonucleotides processively in the 3' to 5' direction. The chain is Exoribonuclease 2 from Enterobacter sp. (strain 638).